Reading from the N-terminus, the 148-residue chain is MTERTLVLLKPDAVKRRLIGRIISRLEDKGLKVVALKFMQMTKDQAENHYSVHRSKPFFKDLVTYITSGPIVAMVLEGPKAIEVVRILAGSTDGSKAQPGTIRGDFSMGIEKNIIHASDSPEAYSHEMPIFFNESEIVEWSYGDEIIY.

Residues lysine 10, phenylalanine 58, arginine 86, threonine 92, arginine 103, and asparagine 113 each coordinate ATP. The active-site Pros-phosphohistidine intermediate is the histidine 116.

This sequence belongs to the NDK family. It depends on Mg(2+) as a cofactor.

The protein localises to the cytoplasm. The catalysed reaction is a 2'-deoxyribonucleoside 5'-diphosphate + ATP = a 2'-deoxyribonucleoside 5'-triphosphate + ADP. It carries out the reaction a ribonucleoside 5'-diphosphate + ATP = a ribonucleoside 5'-triphosphate + ADP. In terms of biological role, major role in the synthesis of nucleoside triphosphates other than ATP. The ATP gamma phosphate is transferred to the NDP beta phosphate via a ping-pong mechanism, using a phosphorylated active-site intermediate. This Thermoplasma acidophilum (strain ATCC 25905 / DSM 1728 / JCM 9062 / NBRC 15155 / AMRC-C165) protein is Nucleoside diphosphate kinase.